The sequence spans 115 residues: Gonadotropin subunit beta-2 (115 aa).

6 disulfide bridges follow: cysteine 6-cysteine 54, cysteine 20-cysteine 69, cysteine 23-cysteine 107, cysteine 31-cysteine 85, cysteine 35-cysteine 87, and cysteine 90-cysteine 97. N-linked (GlcNAc...) asparagine glycosylation occurs at asparagine 10.

The protein belongs to the glycoprotein hormones subunit beta family. As to quaternary structure, heterodimer of an alpha and a beta chain.

Its subcellular location is the secreted. In terms of biological role, involved in gametogenesis and steroidogenesis. This chain is Gonadotropin subunit beta-2 (cgbb), found in Thunnus obesus (Bigeye tuna).